The chain runs to 1079 residues: Isoleucine--tRNA ligase (1079 aa).

The short motif at Pro-53 to His-63 is the 'HIGH' region element. The 'KMSKS' region motif lies at Lys-611–Arg-615. Lys-614 contributes to the ATP binding site.

It belongs to the class-I aminoacyl-tRNA synthetase family. IleS type 2 subfamily. As to quaternary structure, monomer. Zn(2+) serves as cofactor.

The protein localises to the cytoplasm. It carries out the reaction tRNA(Ile) + L-isoleucine + ATP = L-isoleucyl-tRNA(Ile) + AMP + diphosphate. Catalyzes the attachment of isoleucine to tRNA(Ile). As IleRS can inadvertently accommodate and process structurally similar amino acids such as valine, to avoid such errors it has two additional distinct tRNA(Ile)-dependent editing activities. One activity is designated as 'pretransfer' editing and involves the hydrolysis of activated Val-AMP. The other activity is designated 'posttransfer' editing and involves deacylation of mischarged Val-tRNA(Ile). This Rickettsia canadensis (strain McKiel) protein is Isoleucine--tRNA ligase.